The following is a 70-amino-acid chain: MDNLENRVEELEMKIAFQDGTIEELNTQVIKLNNLLASQQDQLRILLSKLHAVEPSNMASQSEETPPPHY.

It belongs to the SlyX family.

The polypeptide is Protein SlyX homolog (Shewanella pealeana (strain ATCC 700345 / ANG-SQ1)).